The primary structure comprises 146 residues: Regulator of ribonuclease activity B (146 aa).

The disordered stretch occupies residues 110–146; sequence WGTYFEDPDGEEEEGDEFDQDDEDGPADRDEVPATRH. Acidic residues predominate over residues 115-134; that stretch reads EDPDGEEEEGDEFDQDDEDG. Residues 135–146 show a composition bias toward basic and acidic residues; the sequence is PADRDEVPATRH.

The protein belongs to the RraB family. As to quaternary structure, interacts with the C-terminal region of Rne.

It localises to the cytoplasm. Globally modulates RNA abundance by binding to RNase E (Rne) and regulating its endonucleolytic activity. Can modulate Rne action in a substrate-dependent manner by altering the composition of the degradosome. This Sodalis glossinidius (strain morsitans) protein is Regulator of ribonuclease activity B.